A 76-amino-acid polypeptide reads, in one-letter code: MTPVHFSFTSAFILGLMGLAFHRTHLLSALLCLEGMMLSLFIALSLWALQMEATGYSVAPMLLLAFSACEASAGLA.

The next 3 membrane-spanning stretches (helical) occupy residues 1–21, 29–49, and 56–76; these read MTPV…GLAF, ALLC…LWAL, and YSVA…AGLA.

This sequence belongs to the complex I subunit 4L family.

It is found in the mitochondrion membrane. The catalysed reaction is a ubiquinone + NADH + 5 H(+)(in) = a ubiquinol + NAD(+) + 4 H(+)(out). Its function is as follows. Core subunit of the mitochondrial membrane respiratory chain NADH dehydrogenase (Complex I) which catalyzes electron transfer from NADH through the respiratory chain, using ubiquinone as an electron acceptor. Part of the enzyme membrane arm which is embedded in the lipid bilayer and involved in proton translocation. The chain is NADH-ubiquinone oxidoreductase chain 4L (MT-ND4L) from Oncorhynchus masou (Cherry salmon).